A 357-amino-acid polypeptide reads, in one-letter code: Probable leucine aminopeptidase MCYG_04170 (357 aa).

Positions 1 to 15 (MKVLAALALSALALA) are cleaved as a signal peptide. Asparagine 76 carries an N-linked (GlcNAc...) asparagine glycan. Positions 167 and 185 each coordinate Zn(2+). The N-linked (GlcNAc...) asparagine glycan is linked to asparagine 186. Residues glutamate 224 and aspartate 251 each coordinate Zn(2+). Cysteine 291 and cysteine 295 are disulfide-bonded. Histidine 324 contacts Zn(2+).

Belongs to the peptidase M28 family. M28E subfamily. In terms of assembly, monomer. Zn(2+) serves as cofactor.

The protein localises to the secreted. Functionally, probable extracellular aminopeptidase which contributes to pathogenicity. The sequence is that of Probable leucine aminopeptidase MCYG_04170 from Arthroderma otae (strain ATCC MYA-4605 / CBS 113480) (Microsporum canis).